A 649-amino-acid chain; its full sequence is V-type ATP synthase subunit I (649 aa).

Transmembrane regions (helical) follow at residues 312 to 332 (FFSF…GLVF), 360 to 380 (FMIL…FFGV), 453 to 473 (FIDN…LSLG), 485 to 505 (IGWV…LQAV), 520 to 540 (GLVG…GGVI), 556 to 576 (VFSD…GAMV), and 593 to 613 (ILII…GGVI).

This sequence belongs to the V-ATPase 116 kDa subunit family.

Its subcellular location is the cell membrane. Its function is as follows. Produces ATP from ADP in the presence of a proton gradient across the membrane. The polypeptide is V-type ATP synthase subunit I (atpI) (Chlamydia trachomatis serovar D (strain ATCC VR-885 / DSM 19411 / UW-3/Cx)).